The chain runs to 348 residues: Probable UDP-arabinopyranose mutase 5 (348 aa).

Residues 100 to 102 carry the DXD motif motif; sequence DDD. Arg148 carries N-linked (Glc...) arginine glycosylation.

Belongs to the RGP family. Heteromers with RGP1 and RGP2. It depends on Mn(2+) as a cofactor. The cofactor is Mg(2+). In terms of processing, reversibly glycosylated in vitro by UDP-glucose, UDP-xylose and UDP-galactose, but not UDP-mannose. As to expression, widely expressed at low levels.

Its subcellular location is the cytoplasm. It is found in the cytosol. It localises to the golgi apparatus. It carries out the reaction UDP-beta-L-arabinofuranose = UDP-beta-L-arabinopyranose. Functionally, probable UDP-L-arabinose mutase involved in the biosynthesis of cell wall non-cellulosic polysaccharides. The protein is Probable UDP-arabinopyranose mutase 5 of Arabidopsis thaliana (Mouse-ear cress).